We begin with the raw amino-acid sequence, 142 residues long: Ribosomal RNA large subunit methyltransferase H (142 aa).

Glycine 89 is a binding site for S-adenosyl-L-methionine.

The protein belongs to the RNA methyltransferase RlmH family. As to quaternary structure, homodimer.

It localises to the cytoplasm. It catalyses the reaction pseudouridine(1915) in 23S rRNA + S-adenosyl-L-methionine = N(3)-methylpseudouridine(1915) in 23S rRNA + S-adenosyl-L-homocysteine + H(+). Specifically methylates the pseudouridine at position 1915 (m3Psi1915) in 23S rRNA. This chain is Ribosomal RNA large subunit methyltransferase H, found in Zymomonas mobilis subsp. mobilis (strain ATCC 31821 / ZM4 / CP4).